The following is a 492-amino-acid chain: Catalase (492 aa).

Catalysis depends on residues His-65 and Asn-138. Position 348 (Tyr-348) interacts with heme.

It belongs to the catalase family. Homotetramer. Heme serves as cofactor. In stems, leaves, roots and developing fruits.

The protein localises to the cytoplasm. It is found in the cytosol. It localises to the peroxisome matrix. The catalysed reaction is 2 H2O2 = O2 + 2 H2O. In terms of biological role, catalyzes the degradation of hydrogen peroxide (H(2)O(2)) generated by peroxisomal oxidases to water and oxygen, thereby protecting cells from the toxic effects of hydrogen peroxide. This Capsicum annuum (Capsicum pepper) protein is Catalase (CAT).